Consider the following 207-residue polypeptide: 5-nitrosalicylic acid 1,2-dioxygenase (207 aa).

The 67-residue stretch at 85-151 folds into the Cupin type-2 domain; the sequence is QLIHPGEEVT…GDKDTLMYVI (67 aa).

The enzyme catalyses 5-nitrosalicylate + O2 = 2-oxo-3-(5-oxofuran-2-ylidene)propanoate + nitrite + H(+). Dioxygenase that catalyzes the cleavage of the aromatic ring of 5-nitrosalicylate (5NSA) without prior removal of the nitro group in biodegradation of 5-nitroanthranilate. The protein is 5-nitrosalicylic acid 1,2-dioxygenase (naaB) of Bradyrhizobium sp.